A 176-amino-acid chain; its full sequence is Large ribosomal subunit protein uL16 (176 aa).

Belongs to the universal ribosomal protein uL16 family.

The chain is Large ribosomal subunit protein uL16 from Halobacterium salinarum (strain ATCC 29341 / DSM 671 / R1).